A 400-amino-acid chain; its full sequence is S-adenosylmethionine synthase (400 aa).

136-141 (GTGSTD) serves as a coordination point for ATP.

The protein belongs to the AdoMet synthase 2 family. Mg(2+) serves as cofactor.

The enzyme catalyses L-methionine + ATP + H2O = S-adenosyl-L-methionine + phosphate + diphosphate. It functions in the pathway amino-acid biosynthesis; S-adenosyl-L-methionine biosynthesis; S-adenosyl-L-methionine from L-methionine: step 1/1. Functionally, catalyzes the formation of S-adenosylmethionine from methionine and ATP. This Methanospirillum hungatei JF-1 (strain ATCC 27890 / DSM 864 / NBRC 100397 / JF-1) protein is S-adenosylmethionine synthase.